Here is an 87-residue protein sequence, read N- to C-terminus: Potassium channel toxin TsTXK-beta/Cryptide TyPep-16 (87 aa).

Positions 1 to 19 are cleaved as a signal peptide; that stretch reads MERKLALLLILGMVTLASC. The BetaSPN-type CS-alpha/beta domain maps to 53–87; that stretch reads QFGCPAYEGYCNDHCNDIERKDGECHGFKCKCAKD. Cystine bridges form between C56-C77, C63-C82, and C67-C84.

Belongs to the long chain scorpion toxin family. Class 1 subfamily. As to expression, expressed by the venom gland.

The protein localises to the secreted. Specifically blocks voltage-gated potassium channels Kv4.2/KCND2. When measured at the peak current, the blocking effect of this toxin is about 65% and shows an IC(50)=652 nM. However, when measured at a later moment of the depolarising test pulse (500 ms), a 100% block of the current is observed with an IC(50)=313 nM. This may indicate a preference of the toxin for binding the inactivated state of the channel. The inhibition is completely reversible. In vivo, intraplantar injection into rat paw induces overt nociception (licking and lifting behaviors) and decreases the mechanical nociceptive threshold (hyperalgesia). Furthermore, the hyperalgesia is prolonged when intrathecal injections are performed. In terms of biological role, induces discomfort and anxiety in mice, as it moderately diminishes locomotion (but has no effect on rearing behavior). Does not cause hemolysis, mast cell degranulation, LDH release, and does not have antimicrobial activity. Does not cause edema and pain. Its function is as follows. Does not induce hemolytic activity, lactate dehydrogenase (LDH) release from mast cells, mast cell degranulation, and antimicrobial effects. In vivo, injection into mice causes moderate edema formation, but induces very weak or no change in nociceptive sensibility. It also reduces mice locomotion, suggesting an increase in anxiety, but causes no alteration in rearing (standing on hind limbs). In Tityus serrulatus (Brazilian scorpion), this protein is Potassium channel toxin TsTXK-beta/Cryptide TyPep-16.